The following is a 198-amino-acid chain: Na(+)-translocating NADH-quinone reductase subunit E (198 aa).

The next 6 helical transmembrane spans lie at 11-31, 39-59, 77-97, 110-130, 140-160, and 176-196; these read SIFIENMALSFFLGMCTFLAV, FGLGVAVVVVLTIAVPVNNLV, FLSFITFIGVIAALVQILEMI, GIFLPLITVNCAIFGGVSFMV, VVYGFGSGIGWMLAIVALAGI, and LGITFITVGLMALGFMSFSGV.

This sequence belongs to the NqrDE/RnfAE family. In terms of assembly, composed of six subunits; NqrA, NqrB, NqrC, NqrD, NqrE and NqrF.

The protein localises to the cell inner membrane. It carries out the reaction a ubiquinone + n Na(+)(in) + NADH + H(+) = a ubiquinol + n Na(+)(out) + NAD(+). NQR complex catalyzes the reduction of ubiquinone-1 to ubiquinol by two successive reactions, coupled with the transport of Na(+) ions from the cytoplasm to the periplasm. NqrA to NqrE are probably involved in the second step, the conversion of ubisemiquinone to ubiquinol. The polypeptide is Na(+)-translocating NADH-quinone reductase subunit E (Aliivibrio fischeri (strain ATCC 700601 / ES114) (Vibrio fischeri)).